The primary structure comprises 51 residues: APNQRLCGSHLVEALFLICGERGFYYSPRTGIVEQCCENTCSLYELENYCN.

3 cysteine pairs are disulfide-bonded: Cys-7–Cys-37, Cys-19–Cys-50, and Cys-36–Cys-41.

This sequence belongs to the insulin family. In terms of assembly, heterodimer of a B chain and an A chain linked by two disulfide bonds.

Its subcellular location is the secreted. In terms of biological role, insulin decreases blood glucose concentration. It increases cell permeability to monosaccharides, amino acids and fatty acids. It accelerates glycolysis, the pentose phosphate cycle, and glycogen synthesis in liver. This is Insulin (INS) from Ptyas dhumnades (Big-eyed ratsnake).